The primary structure comprises 350 residues: Nicotinate-nucleotide--dimethylbenzimidazole phosphoribosyltransferase (350 aa).

The active-site Proton acceptor is Glu-317.

This sequence belongs to the CobT family.

It catalyses the reaction 5,6-dimethylbenzimidazole + nicotinate beta-D-ribonucleotide = alpha-ribazole 5'-phosphate + nicotinate + H(+). The protein operates within nucleoside biosynthesis; alpha-ribazole biosynthesis; alpha-ribazole from 5,6-dimethylbenzimidazole: step 1/2. Functionally, catalyzes the synthesis of alpha-ribazole-5'-phosphate from nicotinate mononucleotide (NAMN) and 5,6-dimethylbenzimidazole (DMB). This chain is Nicotinate-nucleotide--dimethylbenzimidazole phosphoribosyltransferase, found in Shewanella sp. (strain ANA-3).